The sequence spans 685 residues: Probable inactive leucine-rich repeat receptor-like protein kinase At1g66830 (685 aa).

A signal peptide spans 1–21 (MSQLFLILCFILTHFFAIATS). Topologically, residues 22–305 (LNDQGLALLS…RRANHHSRLC (284 aa)) are extracellular. N-linked (GlcNAc...) asparagine glycans are attached at residues Asn-38 and Asn-48. 8 LRR repeats span residues 65–89 (DMRV…IGSL), 90–113 (LSLR…LFGL), 115–136 (GLQS…EIGS), 137–161 (LKSL…LIPC), 162–185 (KKLK…LGSN), 186–210 (LVHL…VGSL), 212–234 (NLKG…SLGN), and 235–260 (LPEL…VLLN). N-linked (GlcNAc...) asparagine glycosylation is present at Asn-151. Asn-193 carries N-linked (GlcNAc...) asparagine glycosylation. Residue Asn-247 is glycosylated (N-linked (GlcNAc...) asparagine). A helical membrane pass occupies residues 306–326 (IILTATGGTVAGIIFLASLFI). Over 327–685 (YYLRKASARA…ESFEKLVTSI (359 aa)) the chain is Cytoplasmic. Residues 397-682 (KASAFLLGKS…SVLESFEKLV (286 aa)) form the Protein kinase domain. A phosphoserine mark is found at Ser-399, Ser-480, and Ser-590.

Belongs to the protein kinase superfamily. Ser/Thr protein kinase family.

Its subcellular location is the cell membrane. This is Probable inactive leucine-rich repeat receptor-like protein kinase At1g66830 from Arabidopsis thaliana (Mouse-ear cress).